We begin with the raw amino-acid sequence, 433 residues long: MLDIQLLRKDLDGVAKRLADRGYTLDVAAFSALEAERRAIQTRTEELQARRNSLSKQIGAMKGKGEDTSAVMAEVGGIGDEMKASEAKLGEIQTRLSDLMLGMPNIAHESVPVGKDEADNVEVRRWGTPREFDFAVKDHVDVGTPLGLDFETGAKLAGARFTMLRGSIARLHRALAQFMIDTHTLQHGYTETYTPYIVNPEILYGTGQLPKFADDMFRVEKGGGENTITQYLISTSEISLTNTVRESIVEGSALPIKLTAHSPCFRSEAGSYGRDTRGMIRQHQFDKVEMVQVVAPDASYAALDEMVGHAEAILQKLGLPYRVVALCTGDMGFSAAKTFDLEVWLPAQNTYREISSCSNTEAFQARRMQARFRNAQGKPELVHTLNGSGLAVGRTLVAVLENYQNADGSVTVPEALRPYMGGMERIDAPAQVS.

235 to 237 (TSE) contributes to the L-serine binding site. 266 to 268 (RSE) serves as a coordination point for ATP. L-serine is bound at residue E289. Residue 353-356 (EISS) participates in ATP binding. S388 contributes to the L-serine binding site.

Belongs to the class-II aminoacyl-tRNA synthetase family. Type-1 seryl-tRNA synthetase subfamily. As to quaternary structure, homodimer. The tRNA molecule binds across the dimer.

It localises to the cytoplasm. It catalyses the reaction tRNA(Ser) + L-serine + ATP = L-seryl-tRNA(Ser) + AMP + diphosphate + H(+). It carries out the reaction tRNA(Sec) + L-serine + ATP = L-seryl-tRNA(Sec) + AMP + diphosphate + H(+). It participates in aminoacyl-tRNA biosynthesis; selenocysteinyl-tRNA(Sec) biosynthesis; L-seryl-tRNA(Sec) from L-serine and tRNA(Sec): step 1/1. Functionally, catalyzes the attachment of serine to tRNA(Ser). Is also able to aminoacylate tRNA(Sec) with serine, to form the misacylated tRNA L-seryl-tRNA(Sec), which will be further converted into selenocysteinyl-tRNA(Sec). The polypeptide is Serine--tRNA ligase (Burkholderia ambifaria (strain ATCC BAA-244 / DSM 16087 / CCUG 44356 / LMG 19182 / AMMD) (Burkholderia cepacia (strain AMMD))).